The chain runs to 137 residues: Nucleoside diphosphate kinase (137 aa).

ATP-binding residues include K10, F59, R87, T93, R104, and N114. The Pros-phosphohistidine intermediate role is filled by H117.

It belongs to the NDK family. Homotetramer. Mg(2+) is required as a cofactor.

The protein localises to the cytoplasm. The enzyme catalyses a 2'-deoxyribonucleoside 5'-diphosphate + ATP = a 2'-deoxyribonucleoside 5'-triphosphate + ADP. The catalysed reaction is a ribonucleoside 5'-diphosphate + ATP = a ribonucleoside 5'-triphosphate + ADP. In terms of biological role, major role in the synthesis of nucleoside triphosphates other than ATP. The ATP gamma phosphate is transferred to the NDP beta phosphate via a ping-pong mechanism, using a phosphorylated active-site intermediate. This is Nucleoside diphosphate kinase from Streptomyces griseus subsp. griseus (strain JCM 4626 / CBS 651.72 / NBRC 13350 / KCC S-0626 / ISP 5235).